We begin with the raw amino-acid sequence, 138 residues long: Small ribosomal subunit protein uS11 (138 aa).

Residues 1–12 (MAKQSAKGSTTT) are compositionally biased toward polar residues. The interval 1-37 (MAKQSAKGSTTTKRQRGKRREKKNVPRGQAHIQSTFN) is disordered. Over residues 13–22 (KRQRGKRREK) the composition is skewed to basic residues.

Belongs to the universal ribosomal protein uS11 family. As to quaternary structure, part of the 30S ribosomal subunit. Interacts with proteins S7 and S18. Binds to IF-3.

Located on the platform of the 30S subunit, it bridges several disparate RNA helices of the 16S rRNA. Forms part of the Shine-Dalgarno cleft in the 70S ribosome. The polypeptide is Small ribosomal subunit protein uS11 (Roseiflexus castenholzii (strain DSM 13941 / HLO8)).